Here is a 235-residue protein sequence, read N- to C-terminus: Urease accessory protein UreF (235 aa).

It belongs to the UreF family. As to quaternary structure, ureD, UreF and UreG form a complex that acts as a GTP-hydrolysis-dependent molecular chaperone, activating the urease apoprotein by helping to assemble the nickel containing metallocenter of UreC. The UreE protein probably delivers the nickel.

The protein resides in the cytoplasm. In terms of biological role, required for maturation of urease via the functional incorporation of the urease nickel metallocenter. The sequence is that of Urease accessory protein UreF from Haemophilus influenzae (strain 86-028NP).